The chain runs to 377 residues: tRNA-specific 2-thiouridylase MnmA (377 aa).

Residues 18–25 (AMSGGVDS) and Met44 each bind ATP. Cys113 functions as the Nucleophile in the catalytic mechanism. A disulfide bridge links Cys113 with Cys210. Gly137 contributes to the ATP binding site. An interaction with tRNA region spans residues 159–161 (RDQ). Cys210 acts as the Cysteine persulfide intermediate in catalysis.

Belongs to the MnmA/TRMU family.

Its subcellular location is the cytoplasm. It carries out the reaction S-sulfanyl-L-cysteinyl-[protein] + uridine(34) in tRNA + AH2 + ATP = 2-thiouridine(34) in tRNA + L-cysteinyl-[protein] + A + AMP + diphosphate + H(+). Catalyzes the 2-thiolation of uridine at the wobble position (U34) of tRNA, leading to the formation of s(2)U34. This Rhodospirillum rubrum (strain ATCC 11170 / ATH 1.1.1 / DSM 467 / LMG 4362 / NCIMB 8255 / S1) protein is tRNA-specific 2-thiouridylase MnmA.